We begin with the raw amino-acid sequence, 238 residues long: Demethylmenaquinone methyltransferase (238 aa).

Residues Thr65, Asp85, and 109–110 contribute to the S-adenosyl-L-methionine site; that span reads DA.

This sequence belongs to the class I-like SAM-binding methyltransferase superfamily. MenG/UbiE family.

It carries out the reaction a 2-demethylmenaquinol + S-adenosyl-L-methionine = a menaquinol + S-adenosyl-L-homocysteine + H(+). It functions in the pathway quinol/quinone metabolism; menaquinone biosynthesis; menaquinol from 1,4-dihydroxy-2-naphthoate: step 2/2. In terms of biological role, methyltransferase required for the conversion of demethylmenaquinol (DMKH2) to menaquinol (MKH2). The protein is Demethylmenaquinone methyltransferase of Roseiflexus sp. (strain RS-1).